The primary structure comprises 124 residues: Small ribosomal subunit protein uS13 (124 aa).

The tract at residues 91 to 124 (HRKGLPVNGQNTRNNARTRKGKPKAVTGKKQAGK) is disordered.

This sequence belongs to the universal ribosomal protein uS13 family. In terms of assembly, part of the 30S ribosomal subunit. Forms a loose heterodimer with protein S19. Forms two bridges to the 50S subunit in the 70S ribosome.

Located at the top of the head of the 30S subunit, it contacts several helices of the 16S rRNA. In the 70S ribosome it contacts the 23S rRNA (bridge B1a) and protein L5 of the 50S subunit (bridge B1b), connecting the 2 subunits; these bridges are implicated in subunit movement. Contacts the tRNAs in the A and P-sites. This is Small ribosomal subunit protein uS13 from Acholeplasma laidlawii (strain PG-8A).